The chain runs to 270 residues: Bis(5'-nucleosyl)-tetraphosphatase, symmetrical (270 aa).

This sequence belongs to the Ap4A hydrolase family.

The catalysed reaction is P(1),P(4)-bis(5'-adenosyl) tetraphosphate + H2O = 2 ADP + 2 H(+). In terms of biological role, hydrolyzes diadenosine 5',5'''-P1,P4-tetraphosphate to yield ADP. This Actinobacillus pleuropneumoniae serotype 3 (strain JL03) protein is Bis(5'-nucleosyl)-tetraphosphatase, symmetrical.